Consider the following 68-residue polypeptide: Large ribosomal subunit protein bL35 (68 aa).

The protein belongs to the bacterial ribosomal protein bL35 family.

The sequence is that of Large ribosomal subunit protein bL35 from Rickettsia canadensis (strain McKiel).